We begin with the raw amino-acid sequence, 350 residues long: Nicotinate-nucleotide--dimethylbenzimidazole phosphoribosyltransferase (350 aa).

The Proton acceptor role is filled by Glu-317.

It belongs to the CobT family.

The catalysed reaction is 5,6-dimethylbenzimidazole + nicotinate beta-D-ribonucleotide = alpha-ribazole 5'-phosphate + nicotinate + H(+). It functions in the pathway nucleoside biosynthesis; alpha-ribazole biosynthesis; alpha-ribazole from 5,6-dimethylbenzimidazole: step 1/2. Its function is as follows. Catalyzes the synthesis of alpha-ribazole-5'-phosphate from nicotinate mononucleotide (NAMN) and 5,6-dimethylbenzimidazole (DMB). In Shewanella oneidensis (strain ATCC 700550 / JCM 31522 / CIP 106686 / LMG 19005 / NCIMB 14063 / MR-1), this protein is Nicotinate-nucleotide--dimethylbenzimidazole phosphoribosyltransferase.